The primary structure comprises 393 residues: Chalcone synthase 2 (393 aa).

C166 is a catalytic residue.

It belongs to the thiolase-like superfamily. Chalcone/stilbene synthases family.

The enzyme catalyses (E)-4-coumaroyl-CoA + 3 malonyl-CoA + 3 H(+) = 2',4,4',6'-tetrahydroxychalcone + 3 CO2 + 4 CoA. Its pathway is secondary metabolite biosynthesis; flavonoid biosynthesis. Its function is as follows. The primary product of this enzyme is 4,2',4',6'-tetrahydroxychalcone (also termed naringenin-chalcone or chalcone) which can under specific conditions spontaneously isomerize into naringenin. The chain is Chalcone synthase 2 (CHS2) from Ruta graveolens (Common rue).